A 268-amino-acid polypeptide reads, in one-letter code: Hydroxyethylthiazole kinase (268 aa).

Substrate is bound at residue Met47. Positions 123 and 170 each coordinate ATP. Ala196 serves as a coordination point for substrate.

It belongs to the Thz kinase family. Requires Mg(2+) as cofactor.

The catalysed reaction is 5-(2-hydroxyethyl)-4-methylthiazole + ATP = 4-methyl-5-(2-phosphooxyethyl)-thiazole + ADP + H(+). It participates in cofactor biosynthesis; thiamine diphosphate biosynthesis; 4-methyl-5-(2-phosphoethyl)-thiazole from 5-(2-hydroxyethyl)-4-methylthiazole: step 1/1. Functionally, catalyzes the phosphorylation of the hydroxyl group of 4-methyl-5-beta-hydroxyethylthiazole (THZ). The chain is Hydroxyethylthiazole kinase from Finegoldia magna (strain ATCC 29328 / DSM 20472 / WAL 2508) (Peptostreptococcus magnus).